The primary structure comprises 117 residues: Large ribosomal subunit protein uL18 (117 aa).

The protein belongs to the universal ribosomal protein uL18 family. In terms of assembly, part of the 50S ribosomal subunit; part of the 5S rRNA/L5/L18/L25 subcomplex. Contacts the 5S and 23S rRNAs.

This is one of the proteins that bind and probably mediate the attachment of the 5S RNA into the large ribosomal subunit, where it forms part of the central protuberance. The sequence is that of Large ribosomal subunit protein uL18 from Hydrogenovibrio crunogenus (strain DSM 25203 / XCL-2) (Thiomicrospira crunogena).